The chain runs to 901 residues: Desmocollin-2 (901 aa).

Residues 1 to 27 (MEAARPSGSWNGALCRLLLLTLAILIF) form the signal peptide. Positions 28 to 135 (ASDACKNVTL…KEKVLRRAKR (108 aa)) are excised as a propeptide. N-linked (GlcNAc...) asparagine glycans are attached at residues N34 and N166. Cadherin domains are found at residues 136–243 (RWAP…YPIF), 244–355 (TEET…LPTF), 356–471 (TRTS…GPEC), 472–579 (NPPI…FIPK), and 580–694 (KTVI…QLGK). At 136–694 (RWAPIPCSML…IGGGGVQLGK (559 aa)) the chain is on the extracellular side. N392 carries N-linked (GlcNAc...) (complex) asparagine glycosylation. N546 and N629 each carry an N-linked (GlcNAc...) asparagine glycan. A helical transmembrane segment spans residues 695–715 (WAILAILLGIALLFCILFTLV). Residues 716–901 (CGASGTSKQP…RTLAEACMKR (186 aa)) lie on the Cytoplasmic side of the membrane. 3 positions are modified to phosphoserine: S864, S868, and S873.

In terms of assembly, interacts with DSP, PKP2 and JUP. Interacts with DSG3; the interaction may limit the interaction of DSC3 with p38MAPK family members and therefore repress p38MAPK signaling activation. Expressed at intercalated disks in the heart, where it is colocalized with CDH2 (at protein level). Expressed in intestinal mucosal cells (at protein level).

The protein localises to the cell membrane. Its subcellular location is the cell junction. The protein resides in the desmosome. A component of desmosome cell-cell junctions which are required for positive regulation of cellular adhesion. Promotes timely incorporation of DSG2 into desmosome intercellular junctions and promotes interaction of desmosome cell junctions with intermediate filament cytokeratin, via modulation of DSP phosphorylation. Plays an important role in desmosome-mediated maintenance of intestinal epithelial cell intercellular adhesion strength and barrier function. Positively regulates wound healing of intestinal mucosa via promotion of epithelial cell migration, and also plays a role in mechanotransduction of force between intestinal epithelial cells and extracellular matrix. May contribute to epidermal cell positioning (stratification) by mediating differential adhesiveness between cells that express different isoforms. May promote p38MAPK signaling activation that facilitates keratinocyte migration. This is Desmocollin-2 from Homo sapiens (Human).